We begin with the raw amino-acid sequence, 152 residues long: Sulfur-rich protein (152 aa).

The segment covering 1–11 (MSTTPIVSGVT) has biased composition (polar residues). The tract at residues 1–21 (MSTTPIVSGVTSQNNSSENVS) is disordered. The span at 12 to 21 (SQNNSSENVS) shows a compositional bias: low complexity. Helical transmembrane passes span 44–64 (VGLA…LFIL) and 73–93 (IYLA…ILSM).

It is found in the membrane. This is Sulfur-rich protein (srp) from Chlamydia muridarum (strain MoPn / Nigg).